Here is a 108-residue protein sequence, read N- to C-terminus: Replication restart protein PriB (108 aa).

Positions Ile11 to Ile108 constitute an SSB domain.

Belongs to the PriB family. In terms of assembly, homodimer. Interacts with PriA and DnaT. Component of the replication restart primosome. Primosome assembly occurs via a 'hand-off' mechanism. PriA binds to replication forks, subsequently PriB then DnaT bind; DnaT then displaces ssDNA to generate the helicase loading substrate.

Its function is as follows. Involved in the restart of stalled replication forks, which reloads the replicative helicase on sites other than the origin of replication; the PriA-PriB pathway is the major replication restart pathway. During primosome assembly it facilitates complex formation between PriA and DnaT on DNA; stabilizes PriA on DNA. Stimulates the DNA unwinding activity of PriA helicase. This chain is Replication restart protein PriB, found in Nitrosomonas europaea (strain ATCC 19718 / CIP 103999 / KCTC 2705 / NBRC 14298).